The sequence spans 166 residues: Crossover junction endodeoxyribonuclease RuvC (166 aa).

Catalysis depends on residues Asp-9, Glu-70, and Asp-144. Asp-9, Glu-70, and Asp-144 together coordinate Mg(2+).

It belongs to the RuvC family. In terms of assembly, homodimer which binds Holliday junction (HJ) DNA. The HJ becomes 2-fold symmetrical on binding to RuvC with unstacked arms; it has a different conformation from HJ DNA in complex with RuvA. In the full resolvosome a probable DNA-RuvA(4)-RuvB(12)-RuvC(2) complex forms which resolves the HJ. Mg(2+) serves as cofactor.

The protein resides in the cytoplasm. It carries out the reaction Endonucleolytic cleavage at a junction such as a reciprocal single-stranded crossover between two homologous DNA duplexes (Holliday junction).. The RuvA-RuvB-RuvC complex processes Holliday junction (HJ) DNA during genetic recombination and DNA repair. Endonuclease that resolves HJ intermediates. Cleaves cruciform DNA by making single-stranded nicks across the HJ at symmetrical positions within the homologous arms, yielding a 5'-phosphate and a 3'-hydroxyl group; requires a central core of homology in the junction. The consensus cleavage sequence is 5'-(A/T)TT(C/G)-3'. Cleavage occurs on the 3'-side of the TT dinucleotide at the point of strand exchange. HJ branch migration catalyzed by RuvA-RuvB allows RuvC to scan DNA until it finds its consensus sequence, where it cleaves and resolves the cruciform DNA. The sequence is that of Crossover junction endodeoxyribonuclease RuvC from Neorickettsia sennetsu (strain ATCC VR-367 / Miyayama) (Ehrlichia sennetsu).